Reading from the N-terminus, the 177-residue chain is Thaumatin-like protein (177 aa).

Positions 1–26 (MASPATSSAVLVVVLVATLAAGGANA) are cleaved as a signal peptide.

The protein belongs to the thaumatin family.

The protein localises to the secreted. The chain is Thaumatin-like protein from Oryza sativa subsp. japonica (Rice).